A 236-amino-acid polypeptide reads, in one-letter code: RNA-binding protein 24 (236 aa).

Residues 11 to 88 enclose the RRM domain; that stretch reads TKIFVGGLPY…RKANVNLAYL (78 aa). Residues 175-199 are necessary for interaction with EIF4E; that stretch reads QYPYAASPAAAGYVTAGGYGYAVQQ.

As to quaternary structure, interacts with EIF4E; this interaction prevents EIF4E from binding to p53/TP53 mRNA and inhibits the assembly of translation initiation complex. In terms of assembly, (Microbial infection) Interacts with HCV mature core protein; this interaction, which enhances the interaction of Core with 5'-UTR may favor viral replication over translation. (Microbial infection) Interacts with HCV Serine protease/helicase NS3. As to expression, expressed in fetal and adult heart and skeletal muscles.

Its subcellular location is the nucleus. The protein localises to the cytoplasm. Multifunctional RNA-binding protein involved in the regulation of pre-mRNA splicing, mRNA stability and mRNA translation important for cell fate decision and differentiation. Plays a major role in pre-mRNA alternative splicing regulation. Mediates preferentially muscle-specific exon inclusion in numerous mRNAs important for striated cardiac and skeletal muscle cell differentiation. Binds to intronic splicing enhancer (ISE) composed of stretches of GU-rich motifs localized in flanking intron of exon that will be included by alternative splicing. Involved in embryonic stem cell (ESC) transition to cardiac cell differentiation by promoting pre-mRNA alternative splicing events of several pluripotency and/or differentiation genes. Plays a role in the regulation of mRNA stability. Binds to 3'-untranslated region (UTR) AU-rich elements in target transcripts, such as CDKN1A and MYOG, leading to maintain their stabilities. Involved in myogenic differentiation by regulating MYOG levels. Binds to multiple regions in the mRNA 3'-UTR of TP63 isoform 2, hence inducing its destabilization. Also promotes the destabilization of the CHRM2 mRNA via its binding to a region in the coding sequence. Plays a role in the regulation of mRNA translation. Mediates repression of p53/TP53 mRNA translation through its binding to U-rich element in the 3'-UTR, hence preventing EIF4E from binding to p53/TP53 mRNA and translation initiation. Binds to a huge amount of mRNAs. Required for embryonic heart development, sarcomer and M-band formation in striated muscles. Together with RBM20, promotes the expression of short isoforms of PDLIM5/ENH in cardiomyocytes. Its function is as follows. (Microbial infection) Promotes hepatitis C virus (HCV) replication over translation through the inhibition of viral protein expression. Decreases viral translation by linking viral 5'- and 3'-UTRs, blocking 80S ribosome assembly on the viral IRES and enhancing the interaction of the mature core protein and 5'-UTR. The chain is RNA-binding protein 24 from Homo sapiens (Human).